A 298-amino-acid chain; its full sequence is MATH domain and coiled-coil domain-containing protein At3g58280 (298 aa).

The MATH domain occupies 9-128; that stretch reads KKTFGWVIKD…NGEITIIAEV (120 aa). A coiled-coil region spans residues 240 to 288; sequence NLDWLRQKFDQALEKQIAYDTRIGELEKQVKKRKLAVTELEADLEKEKA.

The chain is MATH domain and coiled-coil domain-containing protein At3g58280 from Arabidopsis thaliana (Mouse-ear cress).